The primary structure comprises 372 residues: Probable L-tyrosine/L-aspartate decarboxylase (372 aa).

Lysine 215 is subject to N6-(pyridoxal phosphate)lysine.

This sequence belongs to the group II decarboxylase family. MfnA subfamily. The cofactor is pyridoxal 5'-phosphate.

It carries out the reaction L-tyrosine + H(+) = tyramine + CO2. The enzyme catalyses L-aspartate + H(+) = beta-alanine + CO2. It participates in cofactor biosynthesis; methanofuran biosynthesis. Its pathway is cofactor biosynthesis; coenzyme A biosynthesis. Functionally, catalyzes the decarboxylation of L-tyrosine to produce tyramine for methanofuran biosynthesis. Can also catalyze the decarboxylation of L-aspartate to produce beta-alanine for coenzyme A (CoA) biosynthesis. The protein is Probable L-tyrosine/L-aspartate decarboxylase of Methanopyrus kandleri (strain AV19 / DSM 6324 / JCM 9639 / NBRC 100938).